The primary structure comprises 415 residues: Putative serpin-Z6C (415 aa).

Residues 357–381 (GTEAAAATAVCLTFASAAPSSRRPA) are RCL.

Belongs to the serpin family.

Its function is as follows. Probable serine protease inhibitor. In Oryza sativa subsp. japonica (Rice), this protein is Putative serpin-Z6C.